Reading from the N-terminus, the 226-residue chain is 7-cyano-7-deazaguanine synthase (226 aa).

10–20 (LSGGLDSATAA) provides a ligand contact to ATP. Zn(2+) contacts are provided by Cys191, Cys199, Cys202, and Cys205.

The protein belongs to the QueC family. It depends on Zn(2+) as a cofactor.

The catalysed reaction is 7-carboxy-7-deazaguanine + NH4(+) + ATP = 7-cyano-7-deazaguanine + ADP + phosphate + H2O + H(+). The protein operates within purine metabolism; 7-cyano-7-deazaguanine biosynthesis. Its function is as follows. Catalyzes the ATP-dependent conversion of 7-carboxy-7-deazaguanine (CDG) to 7-cyano-7-deazaguanine (preQ(0)). The protein is 7-cyano-7-deazaguanine synthase of Parasynechococcus marenigrum (strain WH8102).